Consider the following 186-residue polypeptide: Casparian strip membrane protein 3 (186 aa).

Over 1–26 the chain is Cytoplasmic; it reads MTKSTYVELGEEKTSNQKGNMKRGVS. Residues 27–47 form a helical membrane-spanning segment; the sequence is ILDFILRLIAIVATLASAIAM. At 48-74 the chain is on the extracellular side; that stretch reads GTTDESLPFFTQFVRFRANYDDLPTLR. Residues 75 to 95 form a helical membrane-spanning segment; the sequence is FFVVASAIVSGYLILSLPLSI. The Cytoplasmic segment spans residues 96 to 107; sequence LHIIRSSAGMTR. A helical transmembrane segment spans residues 108–128; sequence VIFIILDTVMLGLLTAGSSAA. The Extracellular portion of the chain corresponds to 129-161; that stretch reads ASIVYLAHKGNRKANWFAFCQQYNSFCERISGS. The chain crosses the membrane as a helical span at residues 162–182; that stretch reads LIGSFIAIPLFIMLILLSALV. The Cytoplasmic portion of the chain corresponds to 183 to 186; it reads LSRR.

The protein belongs to the Casparian strip membrane proteins (CASP) family. In terms of assembly, homodimer and heterodimers.

It is found in the cell membrane. Regulates membrane-cell wall junctions and localized cell wall deposition. Required for establishment of the Casparian strip membrane domain (CSD) and the subsequent formation of Casparian strips, a cell wall modification of the root endodermis that determines an apoplastic barrier between the intraorganismal apoplasm and the extraorganismal apoplasm and prevents lateral diffusion. This chain is Casparian strip membrane protein 3, found in Medicago truncatula (Barrel medic).